A 169-amino-acid polypeptide reads, in one-letter code: uncharacterized protein (169 aa).

Ser-165 is subject to Phosphoserine.

This is an uncharacterized protein from Drosophila melanogaster (Fruit fly).